The sequence spans 351 residues: Putative [LysW]-L-2-aminoadipate/[LysW]-L-glutamate phosphate reductase (351 aa).

NADP(+) is bound by residues 10–13 and 34–36; these read SGFT and SRK. C151 is an active-site residue. N318 contributes to the NADP(+) binding site.

This sequence belongs to the NAGSA dehydrogenase family. Type 1 subfamily. LysY sub-subfamily.

It localises to the cytoplasm. It catalyses the reaction [amino-group carrier protein]-C-terminal-N-(1-carboxy-5-oxopentan-1-yl)-L-glutamine + phosphate + NADP(+) = [amino-group carrier protein]-C-terminal-N-(1-carboxy-5-phosphooxy-5-oxopentan-1-yl)-L-glutamine + NADPH + H(+). The catalysed reaction is [amino-group carrier protein]-C-terminal-gamma-(L-glutamyl-5-semialdehyde)-L-glutamate + phosphate + NADP(+) = [amino-group carrier protein]-C-terminal-gamma-(5-phospho-L-glutamyl)-L-glutamate + NADPH + H(+). It participates in amino-acid biosynthesis; L-lysine biosynthesis via AAA pathway; L-lysine from L-alpha-aminoadipate (Thermus route): step 3/5. Its pathway is amino-acid biosynthesis; L-arginine biosynthesis. Its function is as follows. Involved in both the arginine and lysine biosynthetic pathways. The sequence is that of Putative [LysW]-L-2-aminoadipate/[LysW]-L-glutamate phosphate reductase from Pyrobaculum calidifontis (strain DSM 21063 / JCM 11548 / VA1).